The primary structure comprises 755 residues: Dolichyl-phosphate-mannose--protein mannosyltransferase 4 (755 aa).

Residues M1–I23 are disordered. N11 carries N-linked (GlcNAc...) asparagine glycosylation. A compositionally biased stretch (polar residues) spans S13 to I23. 6 helical membrane passes run F92–G112, I147–F167, I185–F205, S212–I232, V237–L257, and A278–L298. 3 MIR domains span residues S325–T389, G396–H454, and K466–I523. N445 is a glycosylation site (N-linked (GlcNAc...) asparagine). Transmembrane regions (helical) follow at residues I595–I615, L640–L660, and Y670–S690. N-linked (GlcNAc...) asparagine glycosylation is present at N691. The chain crosses the membrane as a helical span at residues Y706–F726.

It belongs to the glycosyltransferase 39 family. In terms of assembly, forms a functional homodimer.

The protein localises to the endoplasmic reticulum membrane. It catalyses the reaction a di-trans,poly-cis-dolichyl beta-D-mannosyl phosphate + L-seryl-[protein] = 3-O-(alpha-D-mannosyl)-L-seryl-[protein] + a di-trans,poly-cis-dolichyl phosphate + H(+). The catalysed reaction is a di-trans,poly-cis-dolichyl beta-D-mannosyl phosphate + L-threonyl-[protein] = 3-O-(alpha-D-mannosyl)-L-threonyl-[protein] + a di-trans,poly-cis-dolichyl phosphate + H(+). The protein operates within protein modification; protein glycosylation. Functionally, protein mannosyltransferase (PMT) involved in hyphal growth and drug sensitivity. Transfers mannose from Dol-P-mannose to Ser or Thr residues on proteins. PMT1, PMT2 and PMT4 account for most of the protein-O-glycosylation activity, while PMT5 and PMT6 may specifically modulate a much narrower spectrum of target proteins. Accounts for the O-glycosylation of AXL2, responsible for bud site selection, as well as of the SEC20 t-SNARE component. O-glycosylation of SEC20 is essential for its stability. Required for biofilm formation. The polypeptide is Dolichyl-phosphate-mannose--protein mannosyltransferase 4 (Candida albicans (strain SC5314 / ATCC MYA-2876) (Yeast)).